A 251-amino-acid chain; its full sequence is MQSGASETNKLKYRRVLLKLSGEALMGGGQFGIDIPTCEQFARAIAEAREAGAEICLVIGGGNIFRGVAGAAKGMERAQADSMGMLATVMNALAMQSVLENLGVPTRVQSALNMDAICEPYIRRRAHRHMEKGRVVIFAAGIGNPFFTTDTGAALRAIEMNCDALLKGTQVDGVYTADPKLDATATRYHQVAYQEILAKDLKVMDSSAVSLMRDNNIPIVVFSLKEEGSLLNVLYGRGTSTTITKEGAEKP.

Residue 19–22 coordinates ATP; sequence KLSG. Position 61 (Gly-61) interacts with UMP. Residues Gly-62 and Arg-66 each contribute to the ATP site. UMP is bound by residues Asp-81 and 142–149; that span reads IGNPFFTT. Positions 169, 170, 175, and 178 each coordinate ATP.

Belongs to the UMP kinase family. As to quaternary structure, homohexamer.

It is found in the cytoplasm. It carries out the reaction UMP + ATP = UDP + ADP. The protein operates within pyrimidine metabolism; CTP biosynthesis via de novo pathway; UDP from UMP (UMPK route): step 1/1. With respect to regulation, inhibited by UTP. Catalyzes the reversible phosphorylation of UMP to UDP. This Hyphomonas neptunium (strain ATCC 15444) protein is Uridylate kinase.